We begin with the raw amino-acid sequence, 77 residues long: Omega-conotoxin TxVII (77 aa).

The first 22 residues, 1–22, serve as a signal peptide directing secretion; sequence MKLTCMMIVAVLFLTAWTFATA. The propeptide occupies 23-49; it reads DDSGNGLENLFPKAHHEMKNPEASKLN. Disulfide bonds link Cys-52–Cys-67, Cys-59–Cys-71, and Cys-66–Cys-75.

Expressed by the venom duct.

The protein localises to the secreted. Its function is as follows. Omega-conotoxins act at presynaptic membranes, they bind and block voltage-gated calcium channels (Cav). Specifically acts on L-type channels. It blocks molluscan dihydropyridine-sensitive calcium channels. The chain is Omega-conotoxin TxVII from Conus textile (Cloth-of-gold cone).